Consider the following 434-residue polypeptide: Putative D-alanyl-D-alanine carboxypeptidase (434 aa).

A helical; Signal-anchor transmembrane segment spans residues Y7 to L25.

This sequence belongs to the peptidase S12 family. YfeW subfamily.

The protein localises to the cell inner membrane. The enzyme catalyses Preferential cleavage: (Ac)2-L-Lys-D-Ala-|-D-Ala. Also transpeptidation of peptidyl-alanyl moieties that are N-acyl substituents of D-alanine.. Penicillin-binding protein. Has low DD-carboxypeptidase activity. The protein is Putative D-alanyl-D-alanine carboxypeptidase of Escherichia coli (strain K12).